We begin with the raw amino-acid sequence, 533 residues long: Portal protein B (533 aa).

Belongs to the siphoviridae portal protein family. In terms of assembly, homododecamer. Interacts with the terminase complex composed of two small and one large terminase subunits. Proteolytically cleaved by the viral protease during capsid maturation.

It localises to the virion. In terms of biological role, forms the portal vertex of the capsid. This portal plays critical roles in head assembly, genome packaging, neck/tail attachment, and genome ejection. The portal protein multimerizes as a single ring-shaped homododecamer arranged around a central channel. Binds to the terminase subunits to form the packaging machine. The protein is Portal protein B of Escherichia phage lambda (Bacteriophage lambda).